The primary structure comprises 530 residues: Glutamyl-tRNA reductase 2, chloroplastic (530 aa).

Residues 1–64 constitute a chloroplast transit peptide; that stretch reads MAVSSAFVVT…RCEISPSNKA (64 aa). Substrate contacts are provided by residues 134-137, Ser-194, 199-201, and Gln-205; these read TCNR and EGQ. Cys-135 acts as the Nucleophile in catalysis. Residue 277 to 282 participates in NADP(+) binding; it reads GAGKMG.

It belongs to the glutamyl-tRNA reductase family. Expressed in roots and flowers. Detected in leaves, hypocotyls and cotyledons.

The protein resides in the plastid. It localises to the chloroplast. The enzyme catalyses (S)-4-amino-5-oxopentanoate + tRNA(Glu) + NADP(+) = L-glutamyl-tRNA(Glu) + NADPH + H(+). Its pathway is porphyrin-containing compound metabolism; protoporphyrin-IX biosynthesis; 5-aminolevulinate from L-glutamyl-tRNA(Glu): step 1/2. The protein operates within porphyrin-containing compound metabolism; chlorophyll biosynthesis. Catalyzes the NADPH-dependent reduction of glutamyl-tRNA(Glu) to glutamate 1-semialdehyde (GSA). Probably involved in wound-induced supply of heme to defensive hemoproteins outside plastids. The protein is Glutamyl-tRNA reductase 2, chloroplastic (HEMA2) of Arabidopsis thaliana (Mouse-ear cress).